Consider the following 696-residue polypeptide: Neurogenic protein big brain (696 aa).

Over 1–71 (MADESLHTVP…LEFWRSIISE (71 aa)) the chain is Cytoplasmic. Residue S46 is modified to Phosphoserine. T47 bears the Phosphothreonine mark. The chain crosses the membrane as a helical span at residues 72 to 93 (CLASFMYVFIVCGAAAGVGVGA). The Extracellular segment spans residues 94–97 (SVSS). Residues 98–118 (VLLATALASGLAMATLTQCFL) traverse the membrane as a helical segment. Topologically, residues 119-143 (HISGAHINPAVTLALCVVRSISPIR) are cytoplasmic. The short motif at 126 to 128 (NPA) is the NPA 1 element. Residues 144–167 (AAMYITAQCGGGIAGAALLYGVTV) traverse the membrane as a helical segment. The Extracellular segment spans residues 168–189 (PGYQGNLQAAISHSAALAAWER). Residues 190-208 (FGVEFILTFLVVLCYFVST) form a helical membrane-spanning segment. Residues 209 to 213 (DPMKK) lie on the Cytoplasmic side of the membrane. The chain crosses the membrane as a helical span at residues 214–234 (FMGNSAASIGCAYSACCFVSM). Over 235-256 (PYLNPARSLGPSFVLNKWDSHW) the chain is Extracellular. Positions 238 to 240 (NPA) match the NPA 2 motif. A helical membrane pass occupies residues 257–273 (VYWFGPLVGGMASGLVY). Y273 carries the phosphotyrosine; by Src modification. At 274–696 (EYIFNSRNRN…HYGMLPLRPN (423 aa)) the chain is on the cytoplasmic side. S300 carries the phosphoserine modification. Residues 314–345 (NKYQQSQGTYPRGQSNGNGGGQAAGNGQHQAA) are disordered. A Phosphotyrosine; by Abl modification is found at Y367. Y384 carries the post-translational modification Phosphotyrosine; by Src. S394 carries the post-translational modification Phosphoserine. 2 disordered regions span residues 436 to 634 (MRTQ…KVSA) and 650 to 696 (TSQG…LRPN). Composition is skewed to low complexity over residues 439–451 (QQQQ…QQQQ) and 462–472 (QNQNVQNQMQQ). Y478 carries the post-translational modification Phosphotyrosine; by Src. Positions 487-532 (QQQPIQQQQQQQQQQQLQQQQPNMGVQQQQMQPPPQMMSDPQQQPQ) are enriched in low complexity. The span at 549 to 558 (GNHKYDRRDP) shows a compositional bias: basic and acidic residues. Phosphoserine is present on S576. Residues 576–587 (SDDSSYGSYHGS) show a composition bias toward low complexity. Residues 599 to 616 (EPSPPPPPMLMYAPPPQP) are compositionally biased toward pro residues. Residue Y610 is modified to Phosphotyrosine; by Abl. Over residues 659–686 (QQQQQQQQQQQQQQQQQQQQMMMQQQQQ) the composition is skewed to low complexity.

The protein belongs to the MIP/aquaporin (TC 1.A.8) family. Phosphorylated at its C-terminus. As to expression, detected in all tissues with neurogenic abilities, for example the neurogenic ectoderm.

It is found in the membrane. In terms of biological role, essential for proper differentiation of ectoderm. Acts synergistically with neurogenic locus proteins Notch and Delta during the separation of neural and epidermal cell lineages in response to the lateral inhibition signal. Voltage-insensitive monovalent cation channel. Ion transport is blocked by the presence of divalent cations. The polypeptide is Neurogenic protein big brain (bib) (Drosophila melanogaster (Fruit fly)).